The chain runs to 178 residues: MORN repeat-containing protein 5 (178 aa).

3 MORN repeats span residues 8 to 30 (YDGDYNNGRMEGTGEYTIPTHTR), 31 to 53 (YVGEMKDGMFHGKGVLHFPNGSK), and 54 to 75 (YEGTWEKGICKEGKYTFSDGLK).

It is found in the cell projection. It localises to the cilium. The protein localises to the flagellum. This is MORN repeat-containing protein 5 (morn5) from Danio rerio (Zebrafish).